The primary structure comprises 276 residues: Shikimate dehydrogenase (NADP(+)) (276 aa).

Residues 14-16 (SKS) and threonine 61 each bind shikimate. Lysine 65 acts as the Proton acceptor in catalysis. Aspartate 77 lines the NADP(+) pocket. Residues asparagine 86 and aspartate 102 each coordinate shikimate. NADP(+)-binding positions include 127-131 (GAGGA), 151-156 (NRTPDK), and methionine 214. Tyrosine 216 serves as a coordination point for shikimate. Glycine 238 contacts NADP(+).

Belongs to the shikimate dehydrogenase family. Homodimer.

The catalysed reaction is shikimate + NADP(+) = 3-dehydroshikimate + NADPH + H(+). It functions in the pathway metabolic intermediate biosynthesis; chorismate biosynthesis; chorismate from D-erythrose 4-phosphate and phosphoenolpyruvate: step 4/7. Involved in the biosynthesis of the chorismate, which leads to the biosynthesis of aromatic amino acids. Catalyzes the reversible NADPH linked reduction of 3-dehydroshikimate (DHSA) to yield shikimate (SA). In Nitrosomonas europaea (strain ATCC 19718 / CIP 103999 / KCTC 2705 / NBRC 14298), this protein is Shikimate dehydrogenase (NADP(+)).